Here is a 261-residue protein sequence, read N- to C-terminus: Urease accessory protein UreD (261 aa).

Belongs to the UreD family. In terms of assembly, ureD, UreF and UreG form a complex that acts as a GTP-hydrolysis-dependent molecular chaperone, activating the urease apoprotein by helping to assemble the nickel containing metallocenter of UreC. The UreE protein probably delivers the nickel.

Its subcellular location is the cytoplasm. Its function is as follows. Required for maturation of urease via the functional incorporation of the urease nickel metallocenter. The protein is Urease accessory protein UreD of Haemophilus influenzae (strain ATCC 51907 / DSM 11121 / KW20 / Rd).